Here is a 76-residue protein sequence, read N- to C-terminus: Antimicrobial peptide Smp24 (76 aa).

The N-terminal stretch at 1–22 is a signal peptide; that stretch reads MQYKTFLVIFMAYLLVTHEAEA. Positions 47 to 76 are excised as a propeptide; sequence SKRKRDVEDFFDPYQRDLDLELERLLSQLQ.

The protein belongs to the non-disulfide-bridged peptide (NDBP) superfamily. Medium-length antimicrobial peptide (group 3) family. As to expression, expressed by the venom gland.

Its subcellular location is the secreted. The protein resides in the target cell membrane. Its function is as follows. Peptide that shows antimicrobial activity, moderate cytolysis on eukaryote cells and interference with DNA synthesis. Has potent activity against Gram-positive bacteria and moderate activity against Gram-negative bacteria, as well as moderate activity against fungi. Acts by inducing bacterial membrane disruption. Uses multiple modes of action depending on the membrane lipid composition. Uses a toroidal pore mechanism against the prokaryotic like membrane and forms hexagonal phase non-lamellar structures in eukaryotic-like membrane. Shows activity against B.subtilis (MIC=4 ug/ml), S.epidermidis (MIC=8 ug/ml), S.aureus (MIC=8 ug/ml), E.coli (MIC=64 ug/ml), K.pneumoniae (MIC=128 ug/ml), P.aeruginosa (MIC=256 ug/ml), and C.albicans (MIC=32 ug/ml). Shows moderate hemolysis activity. The polypeptide is Antimicrobial peptide Smp24 (Scorpio palmatus (Israeli golden scorpion)).